Consider the following 1117-residue polypeptide: ATP-dependent RNA helicase mtr4 (1117 aa).

The disordered stretch occupies residues 19 to 86 (KSLKEESKNS…DNQDLIPNND (68 aa)). Residues 65–79 (SATKRAKIENLKDNQ) are compositionally biased toward basic and acidic residues. The Helicase ATP-binding domain occupies 207-363 (IACIERQESV…WITKIHRQPC (157 aa)). 220–227 (AHTSAGKT) serves as a coordination point for ATP. A DEIH box motif is present at residues 311–314 (DEIH). The interval 414–433 (GDDPAAMATKGNAKKGKTGK) is disordered. Residues 441–642 (DIYKIVKMIM…LSYNMILNLL (202 aa)) form the Helicase C-terminal domain.

This sequence belongs to the helicase family. SKI2 subfamily. In terms of assembly, component of the TRAMP complex composed of at least cid14, mtr4, and air1.

The protein localises to the nucleus. Its function is as follows. Component of the TRAMP complex which has a poly(A) RNA polymerase activity and is involved in a post-transcriptional quality control mechanism limiting inappropriate expression of genetic information. Polyadenylation is required for the degradative activity of the exosome on several of its nuclear RNA substrates. Required for heterochromatic gene silencing at centromeric repeats by either exosome- or RNAi-mediated degradation of heterochromatic transcripts. The chain is ATP-dependent RNA helicase mtr4 (mtr4) from Schizosaccharomyces pombe (strain 972 / ATCC 24843) (Fission yeast).